Consider the following 215-residue polypeptide: Sodium channel regulatory subunit beta-3 (215 aa).

A signal peptide spans 1–22; it reads MPAFNRLFPLASLVLIYWVSVC. The Extracellular segment spans residues 23 to 156; the sequence is FPVCVEVPSE…EEAGEDFTSV (134 aa). Disulfide bonds link cysteine 26/cysteine 48 and cysteine 45/cysteine 120. The 123-residue stretch at 32-154 folds into the Ig-like C2-type domain; that stretch reads ETEAVQGNPM…VTEEAGEDFT (123 aa). 4 N-linked (GlcNAc...) asparagine glycosylation sites follow: asparagine 95, asparagine 109, asparagine 113, and asparagine 121. Residues 157–178 form a helical membrane-spanning segment; sequence VSEIMMYILLVFLTLWLLIEMI. At 179–215 the chain is on the cytoplasmic side; that stretch reads YCYRKVSKAEEAAQENASDYLAIPSENKENSAVPVEE.

The protein belongs to the sodium channel auxiliary subunit SCN3B (TC 8.A.17) family. A voltage-gated sodium (Nav) channel consists of an ion-conducting pore-forming alpha subunit functional on its own that is regulated by one or more beta subunits. Forms homodimers and homotrimers. SCN3B is non-covalently associated with alpha subunits and induces the formation of alpha subunit oligomers, including trimers. Interacts with SCN5A/Nav1.5; regulatory subunit of SCN5A/Nav1.5. Interacts with SCN7A/Nav2.1; probable regulatory subunit of SCN7A/Nav2.1. Interacts with SCN10A; regulatory subunit of SCN10A/Nav1.8. Interacts with NFASC; probably involved in targeting the sodium channels to the nodes of Ranvier. In terms of processing, intramolecular disulfide bonds favor the voltage-gated sodium channel oligomeric complex assembly. Post-translationally, N-glycosylated. Expressed in the atrium.

Its subcellular location is the cell membrane. Functionally, regulatory subunit of multiple voltage-gated sodium (Nav) channels directly mediating the depolarization of excitable membranes. Navs, also called VGSCs (voltage-gated sodium channels) or VDSCs (voltage-dependent sodium channels), operate by switching between closed and open conformations depending on the voltage difference across the membrane. In the open conformation they allow Na(+) ions to selectively pass through the pore, along their electrochemical gradient. The influx of Na+ ions provokes membrane depolarization, initiating the propagation of electrical signals throughout cells and tissues. The accessory beta subunits participate in localization and functional modulation of the Nav channels. Modulates the activity of SCN2A/Nav1.2, causing a hyperpolarizing shift in the voltage-dependence of inactivation of the channel and increasing the fraction of channels operating in the fast gating mode. Modulates the activity of SCN5A/Nav1.5. Could also regulate the atypical sodium channel SCN7A/Nav2.1. Modulates the activity of SCN10A/Nav1.8, regulating its oligomerization and accelerating the recovery from inactivation. In Homo sapiens (Human), this protein is Sodium channel regulatory subunit beta-3.